Here is a 75-residue protein sequence, read N- to C-terminus: Small ribosomal subunit protein bS18 (75 aa).

This sequence belongs to the bacterial ribosomal protein bS18 family. Part of the 30S ribosomal subunit. Forms a tight heterodimer with protein bS6.

In terms of biological role, binds as a heterodimer with protein bS6 to the central domain of the 16S rRNA, where it helps stabilize the platform of the 30S subunit. The polypeptide is Small ribosomal subunit protein bS18 (Thermotoga sp. (strain RQ2)).